A 270-amino-acid polypeptide reads, in one-letter code: Tryptophan synthase alpha chain (270 aa).

Residues Glu49 and Asp60 each act as proton acceptor in the active site.

Belongs to the TrpA family. Tetramer of two alpha and two beta chains.

It carries out the reaction (1S,2R)-1-C-(indol-3-yl)glycerol 3-phosphate + L-serine = D-glyceraldehyde 3-phosphate + L-tryptophan + H2O. The protein operates within amino-acid biosynthesis; L-tryptophan biosynthesis; L-tryptophan from chorismate: step 5/5. Its function is as follows. The alpha subunit is responsible for the aldol cleavage of indoleglycerol phosphate to indole and glyceraldehyde 3-phosphate. In Pseudomonas syringae pv. tomato (strain ATCC BAA-871 / DC3000), this protein is Tryptophan synthase alpha chain.